A 691-amino-acid chain; its full sequence is Threonine--tRNA ligase (691 aa).

Positions 1 to 66 (MSAPARPAPA…DADVDVIPVT (66 aa)) constitute a TGS domain. Positions 265–571 (DHRKLGVELD…LTEHYAGAFP (307 aa)) are catalytic. Zn(2+) contacts are provided by C370, H421, and H548.

It belongs to the class-II aminoacyl-tRNA synthetase family. In terms of assembly, homodimer. The cofactor is Zn(2+).

The protein localises to the cytoplasm. It carries out the reaction tRNA(Thr) + L-threonine + ATP = L-threonyl-tRNA(Thr) + AMP + diphosphate + H(+). In terms of biological role, catalyzes the attachment of threonine to tRNA(Thr) in a two-step reaction: L-threonine is first activated by ATP to form Thr-AMP and then transferred to the acceptor end of tRNA(Thr). Also edits incorrectly charged L-seryl-tRNA(Thr). The protein is Threonine--tRNA ligase of Mycolicibacterium vanbaalenii (strain DSM 7251 / JCM 13017 / BCRC 16820 / KCTC 9966 / NRRL B-24157 / PYR-1) (Mycobacterium vanbaalenii).